The primary structure comprises 208 residues: U11/U12 small nuclear ribonucleoprotein 35 kDa protein (208 aa).

Positions 50–128 constitute an RRM domain; that stretch reads LTLFVARLNP…YELLVDVEQE (79 aa). The tract at residues 133-208 is disordered; it reads GWRPRRLGGG…TEDRTHRHTY (76 aa). Residues 171–208 show a composition bias toward basic and acidic residues; sequence RPAEPRGRETERERDRRDYRDRRHERTHTEDRTHRHTY.

It is found in the nucleus. This is U11/U12 small nuclear ribonucleoprotein 35 kDa protein (snrnp35) from Danio rerio (Zebrafish).